The chain runs to 979 residues: Translation initiation factor IF-2 (979 aa).

The interval 68 to 392 (VKQKQGTPAS…SRAAQDAMEL (325 aa)) is disordered. 3 stretches are compositionally biased toward basic and acidic residues: residues 102–179 (QDMR…KPEE), 217–229 (EMEKKEDTEEVFR), and 260–273 (TKEDRQREQNDADG). A compositionally biased stretch (polar residues) spans 309–326 (PSGNKNNNRPAQQQSNAS). The span at 347 to 356 (DVQRQVKETL) shows a compositional bias: basic and acidic residues. The 169-residue stretch at 478–646 (ARPPIVTVMG…KVLLEADILE (169 aa)) folds into the tr-type G domain. The interval 487 to 494 (GHVDHGKT) is G1. 487–494 (GHVDHGKT) contributes to the GTP binding site. Residues 512–516 (GITQH) are G2. The tract at residues 534–537 (DTPG) is G3. GTP contacts are provided by residues 534–538 (DTPGH) and 588–591 (NKID). The interval 588 to 591 (NKID) is G4. A G5 region spans residues 624 to 626 (SAK).

It belongs to the TRAFAC class translation factor GTPase superfamily. Classic translation factor GTPase family. IF-2 subfamily.

The protein localises to the cytoplasm. Functionally, one of the essential components for the initiation of protein synthesis. Protects formylmethionyl-tRNA from spontaneous hydrolysis and promotes its binding to the 30S ribosomal subunits. Also involved in the hydrolysis of GTP during the formation of the 70S ribosomal complex. The protein is Translation initiation factor IF-2 of Porphyromonas gingivalis (strain ATCC 33277 / DSM 20709 / CIP 103683 / JCM 12257 / NCTC 11834 / 2561).